Consider the following 239-residue polypeptide: Exosome complex exonuclease RRP46 homolog (239 aa).

An N-acetylmethionine modification is found at Met1.

The protein belongs to the RNase PH family. In terms of assembly, probable component of the RNA exosome complex.

Its subcellular location is the nucleus. The protein localises to the nucleolus. Functionally, probable component of the exosome 3'-&gt;5' exoribonuclease complex, a complex that degrades inherently unstable mRNAs containing AU-rich elements (AREs) within their 3'-untranslated regions. This chain is Exosome complex exonuclease RRP46 homolog, found in Arabidopsis thaliana (Mouse-ear cress).